The following is a 329-amino-acid chain: Ribosomal RNA small subunit methyltransferase C (329 aa).

The protein belongs to the methyltransferase superfamily. RsmC family. In terms of assembly, monomer.

The protein localises to the cytoplasm. It carries out the reaction guanosine(1207) in 16S rRNA + S-adenosyl-L-methionine = N(2)-methylguanosine(1207) in 16S rRNA + S-adenosyl-L-homocysteine + H(+). Its function is as follows. Specifically methylates the guanine in position 1207 of 16S rRNA in the 30S particle. The sequence is that of Ribosomal RNA small subunit methyltransferase C from Actinobacillus pleuropneumoniae serotype 7 (strain AP76).